Here is a 238-residue protein sequence, read N- to C-terminus: Laccase-S (238 aa).

2 Plastocyanin-like domains span residues 4 to 87 (NVIA…YDPA) and 100 to 238 (HTII…IARY). Asparagine 8 carries N-linked (GlcNAc...) asparagine glycosylation. Histidine 21, histidine 23, histidine 66, and histidine 68 together coordinate Cu cation. An intrachain disulfide couples cysteine 74 to cysteine 162. Asparagine 165 carries an N-linked (GlcNAc...) asparagine glycan.

It belongs to the multicopper oxidase family. Monomer. Requires Cu cation as cofactor.

It is found in the secreted. It catalyses the reaction 4 hydroquinone + O2 = 4 benzosemiquinone + 2 H2O. With respect to regulation, activity is strongly promoted by toluene. Activity is promoted by magnesium, potassium, cadmium, zinc, nickel, sodium, lead and manganese ions. Completely inhibited by IAA (cysteine protease inhibitor), PMSF (serine protease inhibitor), DEP (histidine protease inhibitor) and NAI (tyrosine protease inhibitor). Inhibited by ethanol, acetone, SDS, and EDTA. Activity is strongly inhibited by mercury ions. Also inhibited by lithium, aluminum, calcium, barium and iron ions. Lignin degradation and detoxification of lignin-derived products. Has activity towards 2,2'-azino-bis(3-ethylbenzothiazoline-6-sulfonic acid) (ABTS). This chain is Laccase-S, found in Trametes hirsuta (White-rot fungus).